Reading from the N-terminus, the 858-residue chain is Neural cell adhesion molecule 1 (858 aa).

The first 19 residues, 1–19 (MLQTKDLIWTLFFLGTAVS), serve as a signal peptide directing secretion. Ig-like C2-type domains follow at residues 20 to 111 (LQVD…ATVN), 116 to 205 (QKLM…KDIQ), 212 to 301 (PTIQ…ATIH), 308 to 413 (PKIT…LEVQ), and 416 to 501 (PKLQ…ESLE). Topologically, residues 20–718 (LQVDIVPSQG…IPANGSPTSG (699 aa)) are extracellular. Cystine bridges form between cysteine 41–cysteine 96 and cysteine 139–cysteine 189. N-linked (GlcNAc...) asparagine glycosylation is present at asparagine 222. Cysteine 235 and cysteine 287 form a disulfide bridge. Asparagine 315, asparagine 347, asparagine 433, asparagine 459, and asparagine 488 each carry an N-linked (GlcNAc...) asparagine glycan. Cysteine 329 and cysteine 395 are joined by a disulfide. Cysteines 436 and 489 form a disulfide. Fibronectin type-III domains are found at residues 509 to 608 (TPSS…TQPV) and 611 to 706 (EPSA…SAQP). Proline 706 carries the GPI-anchor amidated asparagine lipid modification. The chain crosses the membrane as a helical span at residues 719-739 (LSTGAIVGILIVIFVLLLVVV). The Cytoplasmic portion of the chain corresponds to 740 to 858 (DITCYFLNKC…TQTKENESKA (119 aa)). Isoleucine 741 is lipidated: GPI-anchor amidated asparagine. Residues 766–858 (GAKGKDMEEG…TQTKENESKA (93 aa)) are disordered. 2 stretches are compositionally biased toward basic and acidic residues: residues 768-809 (KGKD…HTEP) and 817-834 (EPEK…ETET). Residues serine 780 and serine 784 each carry the phosphoserine modification.

In terms of assembly, (Microbial infection) Interacts with rabies virus glycoprotein. (Microbial infection) Interacts with Zika virus envelope protein E. As to quaternary structure, interacts with MDK. Found in a complex with SLC39A6, SLC39A10 and with NCAM1; this complex controls NCAM1 phosphorylation and integration into focal adhesion complexes during epithelial-tomesenchymal transition. Interacts with synaptic plasticity regulator PANTS. Polysialylated at Asn-459 and Asn-488 by ST8SIA2 and ST8SIA4. Polysialylation modulates cell interactions by confering both attractive and repulsive properties that are highly regulated by ST8SIA2 and ST8SIA4. Polysialylation is formed on a-2,3-linked sialic acid of core glycans.

It is found in the cell membrane. It localises to the secreted. In terms of biological role, this protein is a cell adhesion molecule involved in neuron-neuron adhesion, neurite fasciculation, outgrowth of neurites, etc. (Microbial infection) Acts as a receptor for rabies virus. Functionally, (Microbial infection) Acts as a receptor for Zika virus. This chain is Neural cell adhesion molecule 1, found in Homo sapiens (Human).